The chain runs to 515 residues: Probable NADPH:adrenodoxin oxidoreductase, mitochondrial (515 aa).

4 residues coordinate FAD: Ala-52, Glu-73, Leu-81, and Ile-119. Residues 191 to 194, 236 to 237, and Glu-248 each bind NADP(+); these read QGNV and RR. Residues Trp-419 and 426–428 each bind FAD; that span reads GSI. Gly-426 contacts NADP(+).

It belongs to the ferredoxin--NADP reductase type 1 family. FAD is required as a cofactor.

It localises to the mitochondrion inner membrane. It catalyses the reaction 2 reduced [adrenodoxin] + NADP(+) + H(+) = 2 oxidized [adrenodoxin] + NADPH. This is Probable NADPH:adrenodoxin oxidoreductase, mitochondrial (fdxr) from Dictyostelium discoideum (Social amoeba).